Here is a 510-residue protein sequence, read N- to C-terminus: Maturase K (510 aa).

It belongs to the intron maturase 2 family. MatK subfamily.

Its subcellular location is the plastid. It is found in the chloroplast. Its function is as follows. Usually encoded in the trnK tRNA gene intron. Probably assists in splicing its own and other chloroplast group II introns. The chain is Maturase K from Taxus cuspidata (Japanese yew).